Here is a 79-residue protein sequence, read N- to C-terminus: Small ribosomal subunit protein uS17 (79 aa).

The protein belongs to the universal ribosomal protein uS17 family. Part of the 30S ribosomal subunit.

Its function is as follows. One of the primary rRNA binding proteins, it binds specifically to the 5'-end of 16S ribosomal RNA. The sequence is that of Small ribosomal subunit protein uS17 from Orientia tsutsugamushi (strain Ikeda) (Rickettsia tsutsugamushi).